Reading from the N-terminus, the 928-residue chain is MAYNRLGSPQRDGPYSPSAQPQYDSRSPSPGRPLQPYIHPDEAYARQQPLHLQMPTASDDRLAMQPTYSVENVHNPQAYGQQYGQHLPDSGDMGYGRNDYIVSPEEHHDAYYTQPYSPHPQGDYALDPYPSHDEPYRPDTDNVPILQPDSAYGPDPHTQPGMDYDDYQEEPRPTPSPAPIRRWKTVKEVQLFNGNLVLDCPVPPKLLANVPHAKPPERDEFTHMRYSAATCDPSDFHNERFTLRQRLFAKPRQTELFIVVTMYNEDEFLFARTMIGVFKNIEFMCNRSSSKTWGKEAWKKIVVCIVSDGRAKINPRTRAVLAGLGVYQDGIAKQQVNGKDVTAHIYEYTTQVGLELKGTQVSLKPRSATPVQLLFCLKEKNQKKINSHRWFFQAFGRVLDPNICVLIDAGTKPGKDSIYQLWKAFDLEPMCGGACGEIKVMLDHGKKLLNPLVATQNFEYKMSNILDKPLESAFGFISVLPGAFCAYRYVALQNDKNGVGPLEKYFKGETMHADAGVFTANMYLAEDRILCFELVSKRNCRWILQYVKSATGETDVPDRIPEFVLQRRRWLNGSFFAAVYAVAHVYQLWRTDHSFLRKLMFLIEFTYQTINMLFAWFAIGNFFLVFRLLTASLGTKETLGTAGTVLGVVFEFVYLGTLLYCFILSMGNRPQGNPKSYMMMVIFWSVLMVWLTFASIFLTVKSIETEVQQKDFSFSTIFNNSTFFGLIVSLASTYVLWFVASFLFFDPWHMFTCFLQYIVLTPTYINVLNIYAFCNTHDITWGTKGDDKAEKLPSANVKPGGKVDVLIPQDDGDLNAQYDSELKKFATKPPKEVKAPNPADKQEDYYKSFRSNVVTAWMITNFILVAAVLNIAGFDRINVHDTQQQNSTIYLAVILWSVAGLSLFRFTGACWFLVVRMVSLEIWSVCKV.

2 disordered regions span residues 1-45 (MAYN…EAYA) and 110-179 (AYYT…SPAP). A compositionally biased stretch (polar residues) spans 17-28 (PSAQPQYDSRSP). Basic and acidic residues predominate over residues 130 to 140 (PSHDEPYRPDT). The next 9 membrane-spanning stretches (helical) occupy residues 472–492 (SAFGFISVLPGAFCAYRYVAL), 570–589 (WLNGSFFAAVYAVAHVYQLW), 613–633 (LFAWFAIGNFFLVFRLLTASL), 644–664 (TVLGVVFEFVYLGTLLYCFIL), 678–698 (MMMVIFWSVLMVWLTFASIFL), 723–743 (FFGLIVSLASTYVLWFVASFL), 753–773 (CFLQYIVLTPTYINVLNIYAF), 854–874 (VTAWMITNFILVAAVLNIAGF), and 893–913 (VILWSVAGLSLFRFTGACWFL).

The protein belongs to the chitin synthase family. Class I subfamily.

Its subcellular location is the cell membrane. It catalyses the reaction [(1-&gt;4)-N-acetyl-beta-D-glucosaminyl](n) + UDP-N-acetyl-alpha-D-glucosamine = [(1-&gt;4)-N-acetyl-beta-D-glucosaminyl](n+1) + UDP + H(+). In terms of biological role, polymerizes chitin, a structural polymer of the cell wall and septum, by transferring the sugar moiety of UDP-GlcNAc to the non-reducing end of the growing chitin polymer. CHS2 plays a synergistic role to CHS1 in normal yeast cell reproductive growth, even if this role is less predominant than for CHS1. With CHS3, plays an important role in virulence. This chain is Chitin synthase 2, found in Exophiala dermatitidis (Black yeast-like fungus).